Consider the following 216-residue polypeptide: Pyrrolidone-carboxylate peptidase (216 aa).

Active-site residues include Glu-80, Cys-143, and His-168.

This sequence belongs to the peptidase C15 family. In terms of assembly, homotetramer.

The protein localises to the cytoplasm. It carries out the reaction Release of an N-terminal pyroglutamyl group from a polypeptide, the second amino acid generally not being Pro.. In terms of biological role, removes 5-oxoproline from various penultimate amino acid residues except L-proline. This chain is Pyrrolidone-carboxylate peptidase, found in Cupriavidus taiwanensis (strain DSM 17343 / BCRC 17206 / CCUG 44338 / CIP 107171 / LMG 19424 / R1) (Ralstonia taiwanensis (strain LMG 19424)).